Consider the following 216-residue polypeptide: uncharacterized protein (216 aa).

A signal peptide spans 1 to 17 (MLKKIIILFLGMFLLSA). A lipid anchor (N-palmitoyl cysteine) is attached at C18. A lipid anchor (S-diacylglycerol cysteine) is attached at C18. The stretch at 133 to 162 (SDKEKKIQEELNQIKAMLRETKRDISKYTC) forms a coiled coil.

It is found in the cell membrane. This is an uncharacterized protein from Rickettsia conorii (strain ATCC VR-613 / Malish 7).